A 392-amino-acid chain; its full sequence is Membrane cofactor protein (392 aa).

The signal sequence occupies residues 1–34 (MEPPGRRECPFPSWRFPGLLLAAMVLLLYSFSDA). 8 disulfides stabilise this stretch: cysteine 35-cysteine 80, cysteine 64-cysteine 94, cysteine 99-cysteine 141, cysteine 127-cysteine 157, cysteine 162-cysteine 210, cysteine 191-cysteine 223, cysteine 228-cysteine 270, and cysteine 256-cysteine 283. Sushi domains lie at 35-96 (CEEP…ACYR), 97-159 (ETCP…ICEK), 160-225 (VLCT…ECKV), and 226-285 (VKCR…KCLK). Residues 35–343 (CEEPPTFEAM…PEEGILDSLD (309 aa)) are Extracellular-facing. N-linked (GlcNAc...) asparagine glycosylation is found at asparagine 83 and asparagine 114. A glycan (O-linked (GalNAc...) threonine) is linked at threonine 163. N-linked (GlcNAc...) asparagine glycosylation is present at asparagine 273. Serine 290 and serine 291 each carry an O-linked (GalNAc...) serine glycan. Low complexity predominate over residues 291–315 (STKPPALSHSVSTSSTTKSPASSAS). The segment at 291 to 328 (STKPPALSHSVSTSSTTKSPASSASGPRPTYKPPVSNY) is disordered. Residue threonine 292 is glycosylated (O-linked (GalNAc...) threonine). 3 O-linked (GalNAc...) serine glycosylation sites follow: serine 298, serine 300, and serine 302. O-linked (GalNAc...) threonine glycosylation is present at threonine 303. O-linked (GalNAc...) serine glycosylation is found at serine 304 and serine 305. O-linked (GalNAc...) threonine glycans are attached at residues threonine 306 and threonine 307. Serine 309, serine 312, serine 313, and serine 315 each carry an O-linked (GalNAc...) serine glycan. O-linked (GalNAc...) threonine glycosylation occurs at threonine 320. Tyrosine 321 carries the phosphotyrosine modification. Serine 326 is a glycosylation site (O-linked (GalNAc...) serine). Aspartate 340, isoleucine 354, valine 355, leucine 369, glutamine 370, and histidine 384 each carry phosphotyrosine. A helical membrane pass occupies residues 344–366 (VWVIAVIVIAIVVGVAVICVVPY). Residues 367-392 (RYLQRRKKKGTYLTDETHREVKFTSL) are Cytoplasmic-facing.

As to quaternary structure, interacts with C3b. Interacts with C4b. Interacts with moesin/MSN. In terms of assembly, (Microbial infection) Interacts (via N-terminus) with measles virus H protein; this interaction allows attachment and viral entry of vaccine and laboratory-adapted strains. (Microbial infection) Interacts with human herpesvirus 6 GH protein. As to quaternary structure, (Microbial infection) Interacts with human adenovirus B/D fiber protein. In terms of assembly, (Microbial infection) Binds to Streptococcus pyogenes M protein and to type IV pili from Neisseria. Post-translationally, N-glycosylated on Asn-83; Asn-114 and Asn-273 in most tissues, but probably less N-glycosylated in testis. N-glycosylation on Asn-114 and Asn-273 is required for cytoprotective function. N-glycosylation on Asn-114 is required for Measles virus binding. N-glycosylation on Asn-273 is required for Neisseria binding. N-glycosylation is not required for human adenovirus binding. Extensively O-glycosylated in the Ser/Thr-rich domain. O-glycosylation is required for Neisseria binding but not for Measles virus or human adenovirus binding. In terms of processing, in epithelial cells, isoforms B/D/F/H/J/L/3 are phosphorylated by YES1 in response to infection by Neisseria gonorrhoeae; which promotes infectivity. In T-cells, these isoforms may be phosphorylated by LCK. In terms of tissue distribution, expressed by all cells except erythrocytes.

It localises to the cytoplasmic vesicle. The protein localises to the secretory vesicle. It is found in the acrosome inner membrane. Its function is as follows. Acts as a cofactor for complement factor I, a serine protease which protects autologous cells against complement-mediated injury by cleaving C3b and C4b deposited on host tissue. May be involved in the fusion of the spermatozoa with the oocyte during fertilization. Also acts as a costimulatory factor for T-cells which induces the differentiation of CD4+ into T-regulatory 1 cells. T-regulatory 1 cells suppress immune responses by secreting interleukin-10, and therefore are thought to prevent autoimmunity. (Microbial infection) A number of viral and bacterial pathogens seem to bind MCP in order to exploit its immune regulation property and directly induce an immunosuppressive phenotype in T-cells. Functionally, (Microbial infection) Acts as a receptor for Adenovirus subgroup B2 and Ad3. In terms of biological role, (Microbial infection) Acts as a receptor for cultured Measles virus. Its function is as follows. (Microbial infection) Acts as a receptor for Herpesvirus 6/HHV-6. (Microbial infection) May act as a receptor for pathogenic bacteria Neisseria and Streptococcus pyogenes. This chain is Membrane cofactor protein (CD46), found in Homo sapiens (Human).